The following is a 216-amino-acid chain: Large ribosomal subunit protein uL1 (216 aa).

The protein belongs to the universal ribosomal protein uL1 family. Component of the large ribosomal subunit.

The protein resides in the cytoplasm. Component of the large ribosomal subunit. The ribosome is a large ribonucleoprotein complex responsible for the synthesis of proteins in the cell. This Ictalurus punctatus (Channel catfish) protein is Large ribosomal subunit protein uL1 (rpl10a).